The sequence spans 524 residues: Nuclear distribution protein PAC1 (524 aa).

Residues 65–90 (STVLRLQRKIIDLENEVGTLRSIVDG) adopt a coiled-coil conformation. 8 WD repeats span residues 121–160 (QQNQ…TSIP), 166–217 (AHTR…HIRT), 220–262 (GHDH…KSFT), 277–317 (NSQL…GLAL), 353–394 (IPQE…LIPH), 415–454 (GHQS…VTGS), 463–492 (GHDG…DATE), and 493–524 (EESH…KLWS).

The protein belongs to the WD repeat LIS1/nudF family. Self-associates. Interacts with NDL1 and dynein.

The protein localises to the cytoplasm. It is found in the cytoskeleton. Its subcellular location is the spindle pole. Functionally, positively regulates the activity of the minus-end directed microtubule motor protein dynein. Plays a central role in positioning the mitotic spindle at the bud neck during cell division. Targets cytoplasmic dynein to microtubule plus ends, thereby promoting dynein-mediated microtubule sliding along the bud cortex and consequently the movement of the mitotic spindle to the bud neck. The chain is Nuclear distribution protein PAC1 from Scheffersomyces stipitis (strain ATCC 58785 / CBS 6054 / NBRC 10063 / NRRL Y-11545) (Yeast).